Consider the following 259-residue polypeptide: MRRVPLIAGNWKMNLDHLQSIAVVQKLAWTLKDAGHDFGAVEVAVFPPFTDLRSVQTLVAADKLPIAFGGQDVSEHDSGAYTGEIAASFLAALEARYVIIGHSERRTLHNETDEQVAAKTAQAVKNGISPIVCVGETAEDLEKHGASAVPVAQLRAALAGIDSAADFVVAYEPVWAIGSGQAATPEQAEQVAAALRAVIAEALGDEVAAKTRILYGGSVKSGNIAGFMRETNVDGALVGGASLDVAEFAAIIRYQKHVI.

Position 10 to 12 (10 to 12 (NWK)) interacts with substrate. H102 acts as the Electrophile in catalysis. E172 functions as the Proton acceptor in the catalytic mechanism. Residues G178, S218, and 239-240 (GG) each bind substrate.

It belongs to the triosephosphate isomerase family. In terms of assembly, homodimer.

The protein resides in the cytoplasm. The enzyme catalyses D-glyceraldehyde 3-phosphate = dihydroxyacetone phosphate. Its pathway is carbohydrate biosynthesis; gluconeogenesis. It participates in carbohydrate degradation; glycolysis; D-glyceraldehyde 3-phosphate from glycerone phosphate: step 1/1. In terms of biological role, involved in the gluconeogenesis. Catalyzes stereospecifically the conversion of dihydroxyacetone phosphate (DHAP) to D-glyceraldehyde-3-phosphate (G3P). The chain is Triosephosphate isomerase from Leifsonia xyli subsp. xyli (strain CTCB07).